The primary structure comprises 900 residues: MARTDQGLGAESEPLTNQSHRHSNSFSSTDSLSTDGSLFGDDMNATQFQKSTQLPEETPYRDIEEGVEGEPESDILSHPRDKSKRSRGSRWIWVIGLLCLGGWILAFILFWGRRNNNSDISSSVAAVHDAESATGATSYGKPLTLDSVLNGSWGRRKHSISWVAGPDGEDGLLLERGEDGKKGYLRVESILSRQNETDADDGLILMESGTIEANGKYLQPSETWPSPNFKSVLVAVDAVSNWRYSFTATYWLFDVKTQTAQPLDPDAPKGRIQLASWSPNSDAVVFTRDNNLYLRRLDSTTVTQITKDGGKDVFNGIPDWVYEEEVYGSDTATWWSNDGKYVAFLRTNESMVPEFPIEYYMSRLSGKHPSPGLEKYPDVRKIKYPKAGAPNPVVTLQFYDVESTDVFSVNVSGGFADDDRLITEVVWASETKVLVKEFNRESDVVRTVLIDVGSRSGDVIRVDNFAQDDGGWAEVTQSTTFIPADPANGRPDDGYLDIVVHDGYDHWGYFTPVNNSQPILLTSGPWEVVDTQPAVDLRNGIVYLVATKESPTQRHVYSVKLDGSDFQAMTDTSKAGYYDVSFSIGGGYALLSYEGPHIPWQKLVNTPSNQQHFEEVIEQNEHLFSMIEKYALPAEIYQNITIDNITLQVVERRPPHFNPIKKYPVLFWLYGGPGSQSVDRKFMVDFQSYVSSTLGYIVVTVDGRGTGHIGRIARTIVRGNLGFWEARDQIETAKAWAKKPYVDKDHIAIWGWSYGGFMTLKTLEQDAGQTFQYGMAVSPVTDWRFYDSIYTERYMHTPEHNPTGYEHSAISNMTALQQNVRFLIMHGTADDNVHFQNTLSLIDKLDMGGVENYDVHVYPDSDHSIYFHNAHKMVYDRLSSWLVNAFTDEWHHVGSALAAT.

The interval 1–83 (MARTDQGLGA…DILSHPRDKS (83 aa)) is disordered. Topologically, residues 1-90 (MARTDQGLGA…DKSKRSRGSR (90 aa)) are cytoplasmic. Residues 24–39 (NSFSSTDSLSTDGSLF) are compositionally biased toward low complexity. The span at 44 to 55 (NATQFQKSTQLP) shows a compositional bias: polar residues. The helical; Signal-anchor for type II membrane protein transmembrane segment at 91–111 (WIWVIGLLCLGGWILAFILFW) threads the bilayer. The Vacuolar segment spans residues 112-900 (GRRNNNSDIS…HHVGSALAAT (789 aa)). N150, N195, N348, N410, N514, N639, and N644 each carry an N-linked (GlcNAc...) asparagine glycan. S753 functions as the Charge relay system in the catalytic mechanism. A glycan (N-linked (GlcNAc...) asparagine) is linked at N812. Active-site charge relay system residues include D830 and H863.

This sequence belongs to the peptidase S9B family.

The protein resides in the vacuole membrane. The enzyme catalyses Release of an N-terminal dipeptide, Xaa-Yaa-|-Zaa-, from a polypeptide, preferentially when Yaa is Pro, provided Zaa is neither Pro nor hydroxyproline.. Functionally, type IV dipeptidyl-peptidase which removes N-terminal dipeptides sequentially from polypeptides having unsubstituted N-termini provided that the penultimate residue is proline. This Talaromyces stipitatus (strain ATCC 10500 / CBS 375.48 / QM 6759 / NRRL 1006) (Penicillium stipitatum) protein is Probable dipeptidyl-aminopeptidase B (dapB).